A 459-amino-acid polypeptide reads, in one-letter code: Vicilin (459 aa).

An N-terminal signal peptide occupies residues 1–28 (MAATTMKASFPLLMLMGISFLASVCVSS). Residues 36-194 (FIFKSNKFQT…SFNTDYEEIE (159 aa)) enclose the Cupin type-1 1 domain. Disordered regions lie at residues 235 to 258 (LSKN…NLRS), 321 to 346 (ELVG…QGEE), and 430 to 459 (ENQK…LSSV). A compositionally biased stretch (low complexity) spans 238 to 251 (NAKSTSKKSVSSES). Positions 254–426 (FNLRSRGPIY…AFPGSAQEVD (173 aa)) constitute a Cupin type-1 2 domain. Acidic residues predominate over residues 337 to 346 (DDEEEEQGEE). Over residues 444-459 (QRERGSRETRDRLSSV) the composition is skewed to basic and acidic residues.

It belongs to the 7S seed storage protein family.

The protein localises to the vacuole. Its subcellular location is the aleurone grain. Seed storage protein. The polypeptide is Vicilin (Pisum sativum (Garden pea)).